A 264-amino-acid polypeptide reads, in one-letter code: Ribonuclease HII (264 aa).

The RNase H type-2 domain maps to 33-224 (GPVAGVDEVG…VRRVASGSNT (192 aa)). A divalent metal cation is bound by residues Asp39, Glu40, and Asp133. Residues 222 to 264 (SNTAEVADGQPDPRDGTAQTGEGRWSKSSHPATMRATGRAQGT) form a disordered region.

The protein belongs to the RNase HII family. Mn(2+) is required as a cofactor. It depends on Mg(2+) as a cofactor.

Its subcellular location is the cytoplasm. It carries out the reaction Endonucleolytic cleavage to 5'-phosphomonoester.. In terms of biological role, endonuclease that specifically degrades the RNA of RNA-DNA hybrids. In Mycobacterium bovis (strain BCG / Pasteur 1173P2), this protein is Ribonuclease HII.